A 114-amino-acid polypeptide reads, in one-letter code: PDZK1-interacting protein 1 (114 aa).

At 1–28 the chain is on the extracellular side; it reads MSALSLLILGLLTAVPPASCQQGLGNLQ. Residues 29–51 form a helical membrane-spanning segment; the sequence is PWMQGLIAVAVFLVLVAIAFAVN. Residues 52 to 114 lie on the Cytoplasmic side of the membrane; sequence HFWCQEEPEP…EEGKVRSTPM (63 aa). Serine 85 bears the Phosphoserine mark. The tract at residues 94 to 114 is disordered; it reads EHENAYENVPEEEGKVRSTPM. A compositionally biased stretch (basic and acidic residues) spans 105 to 114; it reads EEGKVRSTPM.

Belongs to the PDZK1-interacting protein 1/SMIM24 family. Forms a heterodimer (via N-terminal transmembrane helix) with SLC5A2/SGLT2 (via TM13); this interaction enhances SLC5A2 transporter activity. Interacts with PDZK1.

The protein localises to the apical cell membrane. Auxiliary protein of electrogenic Na(+)-coupled sugar symporter SLC5A2/SGLT2 and SLC5A1/SGLT1. Essential for the transporter activity of SLC5A2/SGLT2 but not SLC5A1/SGLT1. The protein is PDZK1-interacting protein 1 of Homo sapiens (Human).